A 248-amino-acid chain; its full sequence is ATP synthase subunit a, chloroplastic (248 aa).

Transmembrane regions (helical) follow at residues 38–58 (QVLI…AIAV), 96–116 (VPFI…GALL), 135–155 (INTT…AGLT), 200–220 (LVVV…VMFL), and 221–241 (GLFT…AYIG).

This sequence belongs to the ATPase A chain family. F-type ATPases have 2 components, CF(1) - the catalytic core - and CF(0) - the membrane proton channel. CF(1) has five subunits: alpha(3), beta(3), gamma(1), delta(1), epsilon(1). CF(0) has four main subunits: a, b, b' and c.

Its subcellular location is the plastid. It is found in the chloroplast thylakoid membrane. Functionally, key component of the proton channel; it plays a direct role in the translocation of protons across the membrane. The polypeptide is ATP synthase subunit a, chloroplastic (Nymphaea alba (White water-lily)).